A 339-amino-acid chain; its full sequence is MPSYIVVGGQWGDEGKGSLIAYLALKDEPQIIARGGVGTNAGHSVFINGRKYAVRQLPTGFMQTKARLLVGAGVLVDPGVFFHELEHLKEFNVAERVGIDYRCAIIEPRHKERDRASSYLHDKIGTTGSGCGPANADRVMRMAKQAKDIKELEPYLTDVAQEINDALDEGKLVLIEGTQGFGLSLYYGTYPYVTSKDTTASAIASDVGIGPTRVDDVIVVFKSFPTRVGEGPFPTEMSAEEAERLGLVEYGTVTGRRRRVGWFDFEFARYSARLNGATMLAITMLDKYDKGAFGVTDYDKLPRKAKEFIEEIEERVGIPVGIIKTGPELEHVIDRRDTL.

GTP contacts are provided by residues 12–18 (GDEGKGS) and 42–44 (GHS). The active-site Proton acceptor is the aspartate 13. Aspartate 13 and glycine 42 together coordinate Mg(2+). IMP is bound by residues 13–16 (DEGK), 40–43 (NAGH), threonine 127, arginine 141, glutamine 179, threonine 194, and arginine 256. Histidine 43 (proton donor) is an active-site residue. Residue 252-258 (TVTGRRR) participates in substrate binding. Residues arginine 258, 284–286 (MLD), and 324–326 (KTG) contribute to the GTP site.

This sequence belongs to the adenylosuccinate synthetase family. Homodimer. Requires Mg(2+) as cofactor.

The protein localises to the cytoplasm. It carries out the reaction IMP + L-aspartate + GTP = N(6)-(1,2-dicarboxyethyl)-AMP + GDP + phosphate + 2 H(+). The protein operates within purine metabolism; AMP biosynthesis via de novo pathway; AMP from IMP: step 1/2. Its function is as follows. Plays an important role in the de novo pathway of purine nucleotide biosynthesis. Catalyzes the first committed step in the biosynthesis of AMP from IMP. This is Adenylosuccinate synthetase from Thermococcus onnurineus (strain NA1).